We begin with the raw amino-acid sequence, 452 residues long: 1-aminocyclopropane-1-carboxylate synthase 3 (452 aa).

Lysine 283 is modified (N6-(pyridoxal phosphate)lysine).

The protein belongs to the class-I pyridoxal-phosphate-dependent aminotransferase family. Requires pyridoxal 5'-phosphate as cofactor. In terms of tissue distribution, expressed in leaves. Expressed in roots and leaf blades. Expressed at low levels in leaf sheaths and shoot bases.

It catalyses the reaction S-adenosyl-L-methionine = 1-aminocyclopropane-1-carboxylate + S-methyl-5'-thioadenosine + H(+). The protein operates within alkene biosynthesis; ethylene biosynthesis via S-adenosyl-L-methionine; ethylene from S-adenosyl-L-methionine: step 1/2. Its function is as follows. Catalyzes the formation of 1-aminocyclopropane-1-carboxylate, a direct precursor of ethylene in higher plants. The protein is 1-aminocyclopropane-1-carboxylate synthase 3 of Oryza sativa subsp. japonica (Rice).